A 407-amino-acid chain; its full sequence is Phosphoglycerate kinase (407 aa).

Residues 27–29, Arg43, 66–69, Arg125, and Arg165 contribute to the substrate site; these read DLN and HLGR. ATP is bound by residues Lys215, Gly303, Glu334, and 363 to 366; that span reads GGDS.

It belongs to the phosphoglycerate kinase family. As to quaternary structure, monomer.

It is found in the cytoplasm. It catalyses the reaction (2R)-3-phosphoglycerate + ATP = (2R)-3-phospho-glyceroyl phosphate + ADP. Its pathway is carbohydrate degradation; glycolysis; pyruvate from D-glyceraldehyde 3-phosphate: step 2/5. This chain is Phosphoglycerate kinase, found in Mycobacterium sp. (strain JLS).